The primary structure comprises 98 residues: Large ribosomal subunit protein bL27 (98 aa).

Positions 1–9 (MLKMNLQLF) are excised as a propeptide.

It belongs to the bacterial ribosomal protein bL27 family. The N-terminus is cleaved by ribosomal processing cysteine protease Prp.

In Desulfitobacterium hafniense (strain DSM 10664 / DCB-2), this protein is Large ribosomal subunit protein bL27.